A 622-amino-acid polypeptide reads, in one-letter code: MTEAKNYEFQAETKKLLDIVINSLYTERDVFVRELISNSADALEKMRHEALTCQEVLDEDLPLEITIDLDEEAHTLTISDSGIGMTEQELVNNLGVIAHSGSGSFYAELAEAVKKDVNLIGQFGVGFYAAFMAGNKVRVQTRSWDGSQGHEWLSEGAGSFTITPLDGLARGTRIVVELKDDAHEYAQDWKIKNVIEQYSSFVSFPIKLKGEVVNTVQALWSRSKSEISDEEYNEFYKFIGNATEDPSYRLHFSADAPLSIKSLLFVPKENFEVMGFGRVEPGVNLYCQRILIDQHSENILPGWLRFLKGVVDSEDLPLNISRQSLQDNALVSKIRRVVTKRFLKYLAEEATRDESQYLQFWSTFGIYLKEGVTTDYEYQKELGKLLRFETSKSELGVPVSLADYLLRMNPDQEKIYYINGASRAAIEAGPYVEMFKKKDIEIVYTLDPIDDFVLSHLQEFEGKKLVSADGADISLDKEEAEDALVDESGVDKAELAELLTWMKEELKDEVGDVLSSHRLVDAPAMIVNADGFMSASMERVLAASRKEQGIAGVDGSKKHLEINGKNPLIKQLAELRKADAGFAGEVAHQILDNAMIQAGLVVDPLKMVARNYKILDRAVSRA.

The interval M1 to R322 is a; substrate-binding. A b region spans residues Q323–R539. Residues V540 to A622 form a c region.

It belongs to the heat shock protein 90 family. In terms of assembly, homodimer.

The protein resides in the cytoplasm. Molecular chaperone. Has ATPase activity. The chain is Chaperone protein HtpG from Desulfotalea psychrophila (strain LSv54 / DSM 12343).